Reading from the N-terminus, the 119-residue chain is Large ribosomal subunit protein uL14 (119 aa).

It belongs to the universal ribosomal protein uL14 family. As to quaternary structure, part of the 50S ribosomal subunit. Forms a cluster with proteins L3 and L19. In the 70S ribosome, L14 and L19 interact and together make contacts with the 16S rRNA in bridges B5 and B8.

Binds to 23S rRNA. Forms part of two intersubunit bridges in the 70S ribosome. The protein is Large ribosomal subunit protein uL14 of Wolbachia pipientis subsp. Culex pipiens (strain wPip).